The following is a 94-amino-acid chain: Large ribosomal subunit protein bL25 (94 aa).

Belongs to the bacterial ribosomal protein bL25 family. In terms of assembly, part of the 50S ribosomal subunit; part of the 5S rRNA/L5/L18/L25 subcomplex. Contacts the 5S rRNA. Binds to the 5S rRNA independently of L5 and L18.

Functionally, this is one of the proteins that binds to the 5S RNA in the ribosome where it forms part of the central protuberance. In Serratia proteamaculans (strain 568), this protein is Large ribosomal subunit protein bL25.